Reading from the N-terminus, the 392-residue chain is DNA-directed RNA polymerase subunit Rpo1C (392 aa).

It belongs to the RNA polymerase beta' chain family. In terms of assembly, part of the RNA polymerase complex.

The protein localises to the cytoplasm. It carries out the reaction RNA(n) + a ribonucleoside 5'-triphosphate = RNA(n+1) + diphosphate. DNA-dependent RNA polymerase (RNAP) catalyzes the transcription of DNA into RNA using the four ribonucleoside triphosphates as substrates. Forms part of the jaw domain. This is DNA-directed RNA polymerase subunit Rpo1C from Saccharolobus islandicus (strain Y.N.15.51 / Yellowstone #2) (Sulfolobus islandicus).